Reading from the N-terminus, the 276-residue chain is Krueppel homolog 2 (276 aa).

Positions 1–37 (MSAPTDQPPRSEGAQTNSSERSSQQQEQPQQSQSQNV) are disordered. Over residues 18 to 35 (SSERSSQQQEQPQQSQSQ) the composition is skewed to low complexity. Serine 22 is subject to Phosphoserine. The next 3 membrane-spanning stretches (helical) occupy residues 53-73 (ALWA…LPIF), 125-145 (LIFF…LYSV), and 181-201 (ILKA…VLAF).

It belongs to the PER33/POM33 family.

Its subcellular location is the membrane. Functionally, member of the dosage-dependent hierarchy effective upon white gene expression. This is Krueppel homolog 2 (Kr-h2) from Drosophila melanogaster (Fruit fly).